Consider the following 386-residue polypeptide: Citrate synthase (386 aa).

Catalysis depends on residues His266 and Asp322.

It belongs to the citrate synthase family.

The enzyme catalyses oxaloacetate + acetyl-CoA + H2O = citrate + CoA + H(+). The protein operates within carbohydrate metabolism; tricarboxylic acid cycle; isocitrate from oxaloacetate: step 1/2. The sequence is that of Citrate synthase (gltA) from Acidithiobacillus ferridurans.